Here is a 561-residue protein sequence, read N- to C-terminus: uncharacterized protein (561 aa).

Residues 1-11 (MSQVSLPSQLK) show a composition bias toward polar residues. 2 disordered regions span residues 1 to 22 (MSQVSLPSQLKETGPRLQSRCR) and 522 to 561 (CSLPQSSPDPVPDGSPRPKQQPQQAQAEQAQQPQQQIMLP). A compositionally biased stretch (low complexity) spans 541–561 (QQPQQAQAEQAQQPQQQIMLP).

The protein to Synechocystis PCC 6803 sll0335 and to M.tuberculosis Rv2567.

This is an uncharacterized protein from Mycobacterium leprae (strain TN).